Reading from the N-terminus, the 658-residue chain is NADH-ubiquinone oxidoreductase chain 5 (658 aa).

A run of 17 helical transmembrane segments spans residues 4 to 23, 30 to 52, 81 to 103, 112 to 129, 133 to 155, 168 to 190, 200 to 222, 243 to 262, 272 to 294, 301 to 319, 329 to 351, 364 to 386, 409 to 431, 452 to 471, 505 to 527, 607 to 629, and 639 to 656; these read TLIV…GRKI, IITC…EVGI, LTVS…SISY, RFFS…ILVT, YLLM…NFWF, LLTN…WSFG, LAPY…GATA, VSAL…LLMR, TVLI…IGLF, VIAY…GIGL, LVNH…HSVA, PFLP…VPFM, IVYF…VLYL, LFLN…FGFL, VPVL…SILY, LSTG…YIST, and LLIL…NKLL.

Belongs to the complex I subunit 5 family.

The protein localises to the mitochondrion inner membrane. It carries out the reaction a ubiquinone + NADH + 5 H(+)(in) = a ubiquinol + NAD(+) + 4 H(+)(out). In terms of biological role, core subunit of the mitochondrial membrane respiratory chain NADH dehydrogenase (Complex I) that is believed to belong to the minimal assembly required for catalysis. Complex I functions in the transfer of electrons from NADH to the respiratory chain. The immediate electron acceptor for the enzyme is believed to be ubiquinone. This is NADH-ubiquinone oxidoreductase chain 5 (nad5) from Talaromyces marneffei (Penicillium marneffei).